A 747-amino-acid chain; its full sequence is Meprin A subunit alpha (747 aa).

Residues 1-20 (MLWIQPACLLSLIFSAHIAA) form the signal peptide. A propeptide spanning residues 21 to 64 (VSIKHLLNGSDHDTDVGEQKDIFEINLAAGLNLFQGDILLPRTR) is cleaved from the precursor. N-linked (GlcNAc...) asparagine glycosylation is found at N28 and N139. In terms of domain architecture, Peptidase M12A spans 65 to 259 (NAMRDPSSRW…IRLNRMYNCT (195 aa)). Residues 65–713 (NAMRDPSSRW…FYAGERCQAM (649 aa)) lie on the Extracellular side of the membrane. 3 cysteine pairs are disulfide-bonded: C106–C258, C127–C146, and C268–C430. H154 is a Zn(2+) binding site. Residue E155 is part of the active site. Zn(2+) is bound by residues H158 and H164. Residues N221, N257, N317, N413, N439, N533, and N540 are each glycosylated (N-linked (GlcNAc...) asparagine). Residues 263–432 (TLLDHCDFEK…ITLTETPCPA (170 aa)) form the MAM domain. An MATH domain is found at 433–594 (GVWTIRNISQ…GDSLIIFVDF (162 aa)). Residues 638–663 (ESLPSSLGQRHPSRQKRSVENTGPME) form a disordered region. The region spanning 671-711 (FRDPCDPNPCQNEGTCVNVKGMASCRCVSGHAFFYAGERCQ) is the EGF-like domain. 3 disulfide bridges follow: C675/C686, C680/C695, and C697/C710. The helical transmembrane segment at 714–741 (HVHGSLLGLLIGCIAGLIFLTFVTFSTT) threads the bilayer. The Cytoplasmic segment spans residues 742-747 (NGKLRQ).

In terms of assembly, homotetramer consisting of disulfide-linked alpha subunits, homooligomer consisting of disulfide-linked alpha subunit homodimers, or heterotetramer of two alpha and two beta subunits formed by non-covalent association of two disulfide-linked heterodimers. Genetic factors determine which oligomer(s) will be formed (strain-specific). Interacts with MBL2 through its carbohydrate moiety. This interaction may inhibit its catalytic activity. Requires Zn(2+) as cofactor. Post-translationally, N-glycosylated; contains GlcNAc, galactose, mannose and a small amount of fucose. As to expression, kidney, intestinal brush borders and salivary ducts.

The protein resides in the membrane. The enzyme catalyses Hydrolysis of protein and peptide substrates preferentially on carboxyl side of hydrophobic residues.. Its activity is regulated as follows. Inhibited by metal ion chelators EDTA and 1,10-phenanthroline, bradykinin analogs, cysteine, CONA65, and several hydroxamate compounds, particularly tyrosine hydroxamate. Not inhibited by 3,4-dichloroisocourmarin, soybean trypsin inhibitor, or the cysteine proteinase inhibitors iodoacetic acid and E-64. This chain is Meprin A subunit alpha (Mep1a), found in Mus musculus (Mouse).